We begin with the raw amino-acid sequence, 455 residues long: Mu-like prophage FluMu DNA circularization protein (455 aa).

Positions 368 to 387 form a DNA-binding region, H-T-H motif; sequence VILDNADAEQWTSYAALEQY.

To phage Mu protein N.

The chain is Mu-like prophage FluMu DNA circularization protein from Haemophilus influenzae (strain ATCC 51907 / DSM 11121 / KW20 / Rd).